A 304-amino-acid chain; its full sequence is UDP-3-O-acyl-N-acetylglucosamine deacetylase (304 aa).

Residues His-78, His-237, and Asp-241 each coordinate Zn(2+). The active-site Proton donor is His-264.

This sequence belongs to the LpxC family. Requires Zn(2+) as cofactor.

The catalysed reaction is a UDP-3-O-[(3R)-3-hydroxyacyl]-N-acetyl-alpha-D-glucosamine + H2O = a UDP-3-O-[(3R)-3-hydroxyacyl]-alpha-D-glucosamine + acetate. Its pathway is glycolipid biosynthesis; lipid IV(A) biosynthesis; lipid IV(A) from (3R)-3-hydroxytetradecanoyl-[acyl-carrier-protein] and UDP-N-acetyl-alpha-D-glucosamine: step 2/6. Functionally, catalyzes the hydrolysis of UDP-3-O-myristoyl-N-acetylglucosamine to form UDP-3-O-myristoylglucosamine and acetate, the committed step in lipid A biosynthesis. The sequence is that of UDP-3-O-acyl-N-acetylglucosamine deacetylase from Methylococcus capsulatus (strain ATCC 33009 / NCIMB 11132 / Bath).